Here is a 139-residue protein sequence, read N- to C-terminus: Large ribosomal subunit protein bL17 (139 aa).

Residues 117 to 139 (DRDPEAKGQDSGPVEIKDESEEG) are disordered.

Belongs to the bacterial ribosomal protein bL17 family. Part of the 50S ribosomal subunit. Contacts protein L32.

This is Large ribosomal subunit protein bL17 from Rhodospirillum centenum (strain ATCC 51521 / SW).